We begin with the raw amino-acid sequence, 802 residues long: Ent-copalyl diphosphate synthase, chloroplastic (802 aa).

A chloroplast-targeting transit peptide spans 1–60 (MSLQYHVLNSIPSTTFLSSTKTTISSSFLTISGSPLNVARDKSRSGSIHCSKLRTQEYIN). Substrate is bound at residue K245. Mg(2+) contacts are provided by D377 and D379. Residues 377 to 380 (DIDD) carry the DXDD motif motif. Residue K463 participates in substrate binding.

Belongs to the terpene synthase family. Tpsc subfamily. It depends on Mg(2+) as a cofactor. The N-terminus is blocked. Expressed in roots, leaves, flowers and also in siliques.

The protein resides in the plastid. The protein localises to the chloroplast. It carries out the reaction (2E,6E,10E)-geranylgeranyl diphosphate = ent-copalyl diphosphate. It functions in the pathway plant hormone biosynthesis; gibberellin biosynthesis. Inhibited by high concentrations of magnesium. Its function is as follows. Catalyzes the conversion of geranylgeranyl diphosphate to the gibberellin precursor ent-copalyl diphosphate. This is Ent-copalyl diphosphate synthase, chloroplastic (GA1) from Arabidopsis thaliana (Mouse-ear cress).